The chain runs to 313 residues: 3-O-acetylpapaveroxine carboxylesterase CXE2 (313 aa).

The Involved in the stabilization of the negatively charged intermediate by the formation of the oxyanion hole signature appears at 72 to 74 (HGG). Active-site residues include Ser-158, Asp-262, and His-292.

The protein belongs to the 'GDXG' lipolytic enzyme family.

It carries out the reaction 3-O-acetylpapaveroxine + H2O = narcotine hemiacetal + acetate + H(+). The protein operates within alkaloid biosynthesis. Its function is as follows. Carboxylesterase involved in the biosynthesis of the benzylisoquinoline alkaloid noscapine. Converts 3-O-acetylpapaveroxine to narcotine hemiacetal. In Papaver somniferum (Opium poppy), this protein is 3-O-acetylpapaveroxine carboxylesterase CXE2.